A 393-amino-acid polypeptide reads, in one-letter code: Protein FAM53C (393 aa).

Residue Met-1 is modified to N-acetylmethionine. The disordered stretch occupies residues 77–120 (HLRPPSRGNSPKEPPLSQVLSPEPPDPEKLPVPPAPPSKRHCRS). Phosphoserine is present on residues Ser-122 and Ser-162. Disordered stretches follow at residues 141–167 (LWTP…PKRV) and 204–283 (QPCA…ARKT). The span at 204–215 (QPCATSPQSGSW) shows a compositional bias: polar residues. 5 positions are modified to phosphoserine: Ser-232, Ser-234, Ser-255, Ser-273, and Ser-299. Over residues 241 to 256 (ASRFLPSARSSPASSP) the composition is skewed to low complexity. Residues 343–355 (SCSPVEGSSQVLS) show a composition bias toward low complexity. The interval 343-365 (SCSPVEGSSQVLSESEEEEEGSV) is disordered.

The protein belongs to the FAM53 family.

The polypeptide is Protein FAM53C (Mus musculus (Mouse)).